We begin with the raw amino-acid sequence, 434 residues long: Ribosomal protein uS12 methylthiotransferase RimO (434 aa).

Positions 9-125 (PAIFLLSLGC…VLAAIGAKYR (117 aa)) constitute an MTTase N-terminal domain. [4Fe-4S] cluster is bound by residues Cys18, Cys54, Cys88, Cys149, Cys153, and Cys156. Residues 135-364 (LTPPHYAFLK…MELQEGISAS (230 aa)) form the Radical SAM core domain. Positions 367 to 434 (RKLEGQTLKV…AYELFGRISG (68 aa)) constitute a TRAM domain.

The protein belongs to the methylthiotransferase family. RimO subfamily. [4Fe-4S] cluster serves as cofactor.

The protein resides in the cytoplasm. The enzyme catalyses L-aspartate(89)-[ribosomal protein uS12]-hydrogen + (sulfur carrier)-SH + AH2 + 2 S-adenosyl-L-methionine = 3-methylsulfanyl-L-aspartate(89)-[ribosomal protein uS12]-hydrogen + (sulfur carrier)-H + 5'-deoxyadenosine + L-methionine + A + S-adenosyl-L-homocysteine + 2 H(+). Functionally, catalyzes the methylthiolation of an aspartic acid residue of ribosomal protein uS12. The chain is Ribosomal protein uS12 methylthiotransferase RimO from Chlorobaculum tepidum (strain ATCC 49652 / DSM 12025 / NBRC 103806 / TLS) (Chlorobium tepidum).